An 86-amino-acid polypeptide reads, in one-letter code: MPKDDVIKMEGTITEARRNATFLVELDNGHKILAQISGRMRKNFIRLFPGDRVVVELSIYDLTKGRIVYRKKLDRKGSDEGTGERS.

Residues 1-72 enclose the S1-like domain; sequence MPKDDVIKME…TKGRIVYRKK (72 aa).

This sequence belongs to the IF-1 family. Component of the 30S ribosomal translation pre-initiation complex which assembles on the 30S ribosome in the order IF-2 and IF-3, IF-1 and N-formylmethionyl-tRNA(fMet); mRNA recruitment can occur at any time during PIC assembly.

The protein localises to the cytoplasm. In terms of biological role, one of the essential components for the initiation of protein synthesis. Stabilizes the binding of IF-2 and IF-3 on the 30S subunit to which N-formylmethionyl-tRNA(fMet) subsequently binds. Helps modulate mRNA selection, yielding the 30S pre-initiation complex (PIC). Upon addition of the 50S ribosomal subunit IF-1, IF-2 and IF-3 are released leaving the mature 70S translation initiation complex. In Pseudothermotoga lettingae (strain ATCC BAA-301 / DSM 14385 / NBRC 107922 / TMO) (Thermotoga lettingae), this protein is Translation initiation factor IF-1.